Reading from the N-terminus, the 249-residue chain is Protein-lysine 6-oxidase (249 aa).

Tyr19 bears the Sulfotyrosine mark. Positions 45 to 249 (PDLVPDPYYI…YASGCTISPY (205 aa)) are lysyl-oxidase like. 5 cysteine pairs are disulfide-bonded: Cys70-Cys76, Cys123-Cys172, Cys156-Cys162, Cys183-Cys193, and Cys230-Cys244. Cu cation contacts are provided by His124, His126, and His128. A cross-link (lysine tyrosylquinone (Lys-Tyr)) is located at residues 152 to 187 (KASFCLEDTSCDYGYHRRFACTAHTQGLSPGCYDTY). Tyr187 is modified (2',4',5'-topaquinone).

Belongs to the lysyl oxidase family. As to quaternary structure, interacts with MFAP4. Interacts (via propeptide) with EFEMP2; this interaction is strong and facilitates formation of ternary complexes with ELN during elastic fiber assembly; this interaction limits interaction of EFEMP2 with FBLN5. The cofactor is Cu cation. Lysine tyrosylquinone residue serves as cofactor. In terms of processing, the lysine tyrosylquinone cross-link (LTQ) is generated by condensation of the epsilon-amino group of a lysine with a topaquinone produced by oxidation of tyrosine. Proteolytically cleaved by BMP1 which removes the propeptide. Also proteolytically cleaved by ADAMTS2 and ADAMTS14, but not by ADAMTS3, at an additional cleavage site downstream of the BMP1 cleavage site. The propeptide plays a role in directing the deposition of this enzyme to elastic fibers, via interaction with tropoelastin. Cleavage by BMP1 to remove the propeptide does not increase enzymatic activity but increases binding to collagen. Cleavage by ADAMTS2 produces a form with reduced collagen-binding activity. Post-translationally, sulfated at Tyr-19 and also at either Tyr-15 or Tyr-16 which enhances binding to collagen.

It is found in the secreted. The protein resides in the extracellular space. The catalysed reaction is L-lysyl-[protein] + O2 + H2O = (S)-2-amino-6-oxohexanoyl-[protein] + H2O2 + NH4(+). Responsible for the post-translational oxidative deamination of peptidyl lysine residues in precursors to fibrous collagen and elastin. Regulator of Ras expression. May play a role in tumor suppression. Plays a role in the aortic wall architecture. This Sus scrofa (Pig) protein is Protein-lysine 6-oxidase.